Here is a 368-residue protein sequence, read N- to C-terminus: Molybdenum import ATP-binding protein ModC (368 aa).

The 231-residue stretch at Met-1–Ser-231 folds into the ABC transporter domain. Gly-33–Thr-40 is an ATP binding site. One can recognise a Mop domain in the interval Lys-292–Asp-363.

It belongs to the ABC transporter superfamily. Molybdate importer (TC 3.A.1.8) family. The complex is composed of two ATP-binding proteins (ModC), two transmembrane proteins (ModB) and a solute-binding protein (ModA).

The protein localises to the cell inner membrane. It carries out the reaction molybdate(out) + ATP + H2O = molybdate(in) + ADP + phosphate + H(+). Functionally, part of the ABC transporter complex ModABC involved in molybdenum import. Responsible for energy coupling to the transport system. This Vibrio vulnificus (strain YJ016) protein is Molybdenum import ATP-binding protein ModC.